Here is a 340-residue protein sequence, read N- to C-terminus: Adenosine deaminase-like protein (340 aa).

The Zn(2+) site is built by histidine 14 and histidine 16. Residues histidine 16, asparagine 18, histidine 68, 100–103 (TTPK), and glycine 173 each bind N(6)-methyl-AMP. A Zn(2+)-binding site is contributed by histidine 200. N(6)-methyl-AMP is bound by residues glutamate 203, aspartate 278, and aspartate 279. Glutamate 203 functions as the Proton donor in the catalytic mechanism. Residue aspartate 278 coordinates Zn(2+).

Belongs to the metallo-dependent hydrolases superfamily. Adenosine and AMP deaminases family. As to quaternary structure, monomer. The cofactor is Zn(2+).

It carries out the reaction N(6)-methyl-AMP + H2O + H(+) = IMP + methylamine. Its function is as follows. Catalyzes the hydrolysis of the free cytosolic methylated adenosine nucleotide N(6)-methyl-AMP (N6-mAMP) to produce inositol monophosphate (IMP) and methylamine. Is required for the catabolism of cytosolic N6-mAMP, which is derived from the degradation of mRNA containing N6-methylated adenine (m6A). The protein is Adenosine deaminase-like protein of Drosophila pseudoobscura pseudoobscura (Fruit fly).